A 378-amino-acid chain; its full sequence is Geraniol dehydrogenase (378 aa).

Residues cysteine 48, histidine 75, cysteine 105, cysteine 108, cysteine 111, cysteine 119, and cysteine 179 each coordinate Zn(2+).

It belongs to the zinc-containing alcohol dehydrogenase family. As to quaternary structure, monomer. Zn(2+) serves as cofactor.

It catalyses the reaction (2E)-geraniol + NAD(+) = (2E)-geranial + NADH + H(+). It carries out the reaction (2E,6E)-farnesol + NAD(+) = (2E,6E)-farnesal + NADH + H(+). Its function is as follows. Catalyzes the NAD(+)-dependent oxidation of geraniol to geranial, playing an important role in the biosynthesis of neral, an alarm pheromone. Cannot use NADP(+). Also acts as a farnesol dehydrogenase by catalyzing the oxidation of (2E,6E)-farnesol to (2E,6E)-farnesal, with lower activity compared to geraniol dehydrogenase activity. The polypeptide is Geraniol dehydrogenase (Carpoglyphus lactis (Dried fruit mite)).